A 796-amino-acid chain; its full sequence is Protein tyrosine phosphatase domain-containing protein 1 (796 aa).

The Tyrosine-protein phosphatase domain occupies 126–297 (YSSWVTDNIL…LIPLRNIFSC (172 aa)). Cys-234 acts as the Phosphocysteine intermediate in catalysis. A phosphoserine mark is found at Ser-435 and Ser-437.

This sequence belongs to the protein-tyrosine phosphatase family. Non-receptor class PTPDC1 subfamily.

Its function is as follows. May play roles in cilia formation and/or maintenance. This chain is Protein tyrosine phosphatase domain-containing protein 1 (PTPDC1), found in Bos taurus (Bovine).